The sequence spans 326 residues: Polycomb complex protein BMI-1 (326 aa).

An RING-type zinc finger spans residues 18 to 57 (CVLCGGYFIDATTIIECLHSFCKTCIVRYLETSKYCPICD). The short motif at 81–95 (KLVPGLFKNEMKRRR) is the Nuclear localization signal element. Residues 162-182 (RYLRCPAAMTVMHLRKFLRSK) form an interaction with PHC2 region. The interaction with E4F1 stretch occupies residues 164–228 (LRCPAAMTVM…GPLPLKYRVR (65 aa)). Residues 236–326 (ISHQRDGLTN…VNGSSATSSG (91 aa)) are disordered. A compositionally biased stretch (low complexity) spans 266–278 (PSTSSCLPSPSTP). The span at 279–309 (VQSPHPQFPHISSTMNGTSNSPSGNHQSSFA) shows a compositional bias: polar residues. Positions 315–326 (SSVNGSSATSSG) are enriched in low complexity.

In terms of assembly, component of a PRC1-like complex. Identified in a PRC1-like HPRC-H complex with CBX2, CBX4, CBX8, PHC1, PHC2, PHC3 RING1 and RNF2. Interacts with RNF2/RING2. Interacts with RING1. Part of a complex that contains RNF2, UB2D3 and BMI1, where RNF2 and BMI1 form a tight heterodimer, and UB2D3 interacts only with RNF2. The complex composed of RNF2, UB2D3 and BMI1 binds nucleosomes, and has activity only with nucleosomal histone H2A. Interacts with CBX7 and CBX8. Interacts with SPOP. Part of a complex consisting of BMI1, CUL3 and SPOP. Interacts with E4F1. Interacts with PHC2. Interacts with zinc finger protein ZNF277. May be part of a complex including at least ZNF277, BMI1 and RNF2/RING2. Monoubiquitinated. May be polyubiquitinated; which does not lead to proteasomal degradation.

It localises to the nucleus. Its subcellular location is the cytoplasm. Its function is as follows. Component of a Polycomb group (PcG) multiprotein PRC1-like complex, a complex class required to maintain the transcriptionally repressive state of many genes, including Hox genes, throughout development. PcG PRC1 complex acts via chromatin remodeling and modification of histones; it mediates monoubiquitination of histone H2A 'Lys-119', rendering chromatin heritably changed in its expressibility. The complex composed of RNF2, UB2D3 and BMI1 binds nucleosomes, and has activity only with nucleosomal histone H2A. In the PRC1-like complex, regulates the E3 ubiquitin-protein ligase activity of RNF2/RING2. In Homo sapiens (Human), this protein is Polycomb complex protein BMI-1 (BMI1).